Reading from the N-terminus, the 52-residue chain is Rubredoxin (52 aa).

The region spanning 1–52 is the Rubredoxin-like domain; sequence MKKYVCTVCGYEYDPAEGDPDNGVKPGTSFDDLPADWVCPVCGAPKSEFEAA. Residues Cys-6, Cys-9, Cys-39, and Cys-42 each coordinate Fe cation.

The protein belongs to the rubredoxin family. It depends on Fe(3+) as a cofactor.

Its subcellular location is the cytoplasm. Its function is as follows. Rubredoxin is a small nonheme, iron protein lacking acid-labile sulfide. Its single Fe, chelated to 4 Cys, functions as an electron acceptor and may also stabilize the conformation of the molecule. Electron acceptor for cytoplasmic lactate dehydrogenase. The polypeptide is Rubredoxin (rub) (Nitratidesulfovibrio vulgaris (strain ATCC 29579 / DSM 644 / CCUG 34227 / NCIMB 8303 / VKM B-1760 / Hildenborough) (Desulfovibrio vulgaris)).